The primary structure comprises 500 residues: AAA-ATPase At3g28580 (500 aa).

A helical transmembrane segment spans residues 7–29 (LWTNTGSALATLMFVYTIFKQFF). Positions 174–193 (NRERKLYSNTPGQSHGNNSK) are disordered. Positions 180–193 (YSNTPGQSHGNNSK) are enriched in polar residues. Position 247–254 (247–254 (GPPGTGKS)) interacts with ATP. The interval 462–500 (KEEAKKKVEEEEEEKQRKKEKVKEIEAEKEKKKKIEEEN) is disordered.

It belongs to the AAA ATPase family. BCS1 subfamily. Mg(2+) is required as a cofactor.

It is found in the membrane. The enzyme catalyses ATP + H2O = ADP + phosphate + H(+). This Arabidopsis thaliana (Mouse-ear cress) protein is AAA-ATPase At3g28580.